Here is a 936-residue protein sequence, read N- to C-terminus: MGFWENNKDSITSGLKSAGKYGYQGTKYVAKTGYKASKKHYNNSKARRERKSGKKNSSDEEYESEDEMEHERKPTDIRSLKDPKSFPPPPLKPGQKTYTGQQQQQMPNGQASYAFQGAYQGQPGAGSMEQSQYAQPQYNQYPQQQLQQGVMPQQPPIYGEQVPPYGSNSNATSYQSLPQQNQPQYAIPSQVSLNSASQQSTGFVSQNLQYGTQSSNPAPSPSFQNGLQCHQQPQYVSHGSTNLGQSQFPSGQQQQPTTQFGQQVLPSPAQPHPQPQQQQQGQPLPPPRGQVILPAPGEPLSNGFGQQQQQPLNQNNALLPQMNVEGVSGMAAVQPVYGQAMSSTTNMQDSNPSYGASPMQGQPPVGGQPPVPVRMQPQPPQPMQQGNIYPIEPSLDSTSSTPHFEVTPFDPDAPAPKPKIDIPTVDVSSLPPPPTHRDRGAVLHQEPAPSGKIQPNTTSSAASLPAKHSRTTTADNERNSGNKENDESTSKSSILGHYDVDVNIMPPPKPFRHGLDSVPSEHTRKNASERAVPILPPRNNVEPPPPPSRGNFERTESVLSTNAANVQEDPISNFLPPPKPFRHTETKQNQNSKASPVEIKDEVLPGHPSEEDRNVEPSLLPQSKSQSQSQSQFRRAHMETQPIQNFQPPPKPFRRSQSSNSSDSSYTIDGPEANHGRGRGRIAKHHDGDEYNPKSENSTENGRLGDAPNSFIRKRAPTPPAPSGSEKLHEGAITSEVDSSKDANKYEKSIPPVTSSIQAQQSTKKAPPPVVKPKPRNFSLKANEYPKELTREATGQDEVLNSITNELSHIKLRKINVNLEKLGGSKKVKDSSPVPSDLDEKYVSASGSITPPRPPPSRSSPKKVPPVVPKKNDNLKKKPPVVPKKKPLLKSLEPRPIEMERAYSGDISAADDNLNPFERYKRNVVPQEDDRLHKLK.

4 disordered regions span residues 1 to 315 (MGFW…LNQN), 341 to 795 (MSST…EATG), 818 to 893 (NLEK…KSLE), and 908 to 936 (SAAD…HKLK). Over residues 36 to 54 (ASKKHYNNSKARRERKSGK) the composition is skewed to basic residues. Phosphoserine is present on residues Ser-57, Ser-58, and Ser-64. Residues 59 to 68 (DEEYESEDEM) are compositionally biased toward acidic residues. Basic and acidic residues predominate over residues 69–84 (EHERKPTDIRSLKDPK). Low complexity-rich tracts occupy residues 93-105 (PGQK…QQQQ) and 130-152 (QSQY…GVMP). The segment covering 166-244 (GSNSNATSYQ…YVSHGSTNLG (79 aa)) has biased composition (polar residues). 2 stretches are compositionally biased toward low complexity: residues 245–267 (QSQF…VLPS) and 306–315 (QQQQQPLNQN). The segment covering 341–354 (MSSTTNMQDSNPSY) has biased composition (polar residues). The segment covering 366–382 (GGQPPVPVRMQPQPPQP) has biased composition (pro residues). The segment covering 453–462 (IQPNTTSSAA) has biased composition (polar residues). Ser-463 is modified (phosphoserine). Basic and acidic residues-rich tracts occupy residues 475 to 489 (DNER…DEST), 513 to 528 (HGLD…KNAS), and 598 to 615 (EIKD…DRNV). Low complexity-rich tracts occupy residues 622 to 632 (QSKSQSQSQSQ) and 656 to 665 (SQSSNSSDSS). At Thr-718 the chain carries Phosphothreonine. Positions 738-748 (DSSKDANKYEK) are enriched in basic and acidic residues. Polar residues predominate over residues 752–763 (PVTSSIQAQQST). Thr-850 carries the post-translational modification Phosphothreonine. A compositionally biased stretch (pro residues) spans 851 to 868 (PPRPPPSRSSPKKVPPVV). Positions 877–888 (KKPPVVPKKKPL) are enriched in basic residues.

This sequence belongs to the AIM3 family. Interacts with RVS167.

The protein resides in the membrane raft. The polypeptide is Altered inheritance of mitochondria protein 3 (AIM3) (Saccharomyces cerevisiae (strain RM11-1a) (Baker's yeast)).